Here is a 268-residue protein sequence, read N- to C-terminus: Protein MGF 300-1L (268 aa).

Residues 1–175 are Cytoplasmic-facing; sequence MVSLTTCCLK…QTFKIFYAKN (175 aa). The chain crosses the membrane as a helical span at residues 176-193; sequence YSLSTLYCIFLAIYYKRY. Topologically, residues 194-268 are extracellular; it reads TALRKMVKIY…MYAFSQNNFW (75 aa).

This sequence belongs to the asfivirus MGF 300 family.

Its subcellular location is the host membrane. Functionally, plays a role in virus cell tropism, and may be required for efficient virus replication in macrophages. The sequence is that of Protein MGF 300-1L from African swine fever virus (isolate Tick/South Africa/Pretoriuskop Pr4/1996) (ASFV).